The chain runs to 158 residues: MRRMIIAKLHNVTGIMNRFTAVLNRRQVNILSITAGVTESQDLTHTTFVIEVDHLDEVEQIIKQLNRLIDVIEVADITDLPHVEREVVLIKVSAPPTIRAEIFTMIEPFRVNVVDVNLENVTIQLTGDSAKIEALIDVVSPYGILNMARTGSAGFERG.

The 76-residue stretch at 4–79 folds into the ACT domain; that stretch reads MIIAKLHNVT…DVIEVADITD (76 aa).

Belongs to the acetolactate synthase small subunit family. As to quaternary structure, dimer of large and small chains.

The enzyme catalyses 2 pyruvate + H(+) = (2S)-2-acetolactate + CO2. It participates in amino-acid biosynthesis; L-isoleucine biosynthesis; L-isoleucine from 2-oxobutanoate: step 1/4. It functions in the pathway amino-acid biosynthesis; L-valine biosynthesis; L-valine from pyruvate: step 1/4. This Lactococcus lactis subsp. lactis (strain IL1403) (Streptococcus lactis) protein is Acetolactate synthase small subunit (ilvH).